The chain runs to 158 residues: SsrA-binding protein (158 aa).

The protein belongs to the SmpB family.

It localises to the cytoplasm. Its function is as follows. Required for rescue of stalled ribosomes mediated by trans-translation. Binds to transfer-messenger RNA (tmRNA), required for stable association of tmRNA with ribosomes. tmRNA and SmpB together mimic tRNA shape, replacing the anticodon stem-loop with SmpB. tmRNA is encoded by the ssrA gene; the 2 termini fold to resemble tRNA(Ala) and it encodes a 'tag peptide', a short internal open reading frame. During trans-translation Ala-aminoacylated tmRNA acts like a tRNA, entering the A-site of stalled ribosomes, displacing the stalled mRNA. The ribosome then switches to translate the ORF on the tmRNA; the nascent peptide is terminated with the 'tag peptide' encoded by the tmRNA and targeted for degradation. The ribosome is freed to recommence translation, which seems to be the essential function of trans-translation. The protein is SsrA-binding protein of Glaesserella parasuis serovar 5 (strain SH0165) (Haemophilus parasuis).